Reading from the N-terminus, the 49-residue chain is Defensin Tm-AMP-D1.2 (49 aa).

Cystine bridges form between cysteine 3–cysteine 49, cysteine 14–cysteine 34, cysteine 20–cysteine 43, and cysteine 24–cysteine 45.

In terms of biological role, plant defense peptide. The protein is Defensin Tm-AMP-D1.2 of Triticum monococcum (Einkorn wheat).